Reading from the N-terminus, the 427-residue chain is MKKICYVLLSLVCVFLFSGCSAGEEASGKKEDVTLRIAWWGGQPRHDYTTKVIELYEKKNPHVHIEAEFANWDDYWKKLAPMSAAGQLPDVIQMDTAYLAQYGKKNQLEDLTPYTKDGTIDVSSIDENMLSGGKIDNKLYGFTLGVNVLSVIANEDLLKKAGVSINQENWTWEDYEKLAYDLQEKAGVYGSNGMHPPDIFFPYYLRTKGERFYKEDGTGLAYQDDQLFVDYFERQLRLVKAKTSPTPDESAQIKGMEDDFIVKGKSAITWNYSNQYLGFARLTDSPLSLYLPPEQMQEKALTLKPSMLFSIPKSSEHKKEAAKFINFFVNNEEANQLIKGERGVPVSDKVADAIKPKLNEEETNIVEYVETASKNISKADPPEPVGSAEVIKLLKDTSDQILYQKVSPEKAAKTFRKKANEILERNN.

Belongs to the bacterial solute-binding protein 1 family.

Functionally, may play a role in the degradation of type I rhamnogalacturonan derived from plant cell walls. In Bacillus subtilis (strain 168), this protein is Putative ABC transporter substrate-binding protein YesO (yesO).